A 536-amino-acid polypeptide reads, in one-letter code: Membrane protein insertase YidC (536 aa).

Residues 7 to 27 (IIAVVLSLFVLIGWSYLSEFM) traverse the membrane as a helical segment. The interval 43 to 70 (VQQKASEPVAQPVQTASAPAASSFAPTE) is disordered. A compositionally biased stretch (low complexity) spans 58–68 (ASAPAASSFAP). The next 3 membrane-spanning stretches (helical) occupy residues 346 to 366 (GNYG…FWPL), 415 to 435 (GGCL…QGLL), and 495 to 515 (IMMF…AGLV).

Belongs to the OXA1/ALB3/YidC family. Type 1 subfamily. As to quaternary structure, interacts with the Sec translocase complex via SecD. Specifically interacts with transmembrane segments of nascent integral membrane proteins during membrane integration.

Its subcellular location is the cell inner membrane. In terms of biological role, required for the insertion and/or proper folding and/or complex formation of integral membrane proteins into the membrane. Involved in integration of membrane proteins that insert both dependently and independently of the Sec translocase complex, as well as at least some lipoproteins. Aids folding of multispanning membrane proteins. The sequence is that of Membrane protein insertase YidC from Oleidesulfovibrio alaskensis (strain ATCC BAA-1058 / DSM 17464 / G20) (Desulfovibrio alaskensis).